Reading from the N-terminus, the 207-residue chain is Cytochrome c biogenesis ATP-binding export protein CcmA (207 aa).

Positions 6-207 constitute an ABC transporter domain; that stretch reads LCAEGLECIR…RGDCRSLNLS (202 aa). 38 to 45 provides a ligand contact to ATP; that stretch reads GANGAGKT.

This sequence belongs to the ABC transporter superfamily. CcmA exporter (TC 3.A.1.107) family. In terms of assembly, the complex is composed of two ATP-binding proteins (CcmA) and two transmembrane proteins (CcmB).

The protein localises to the cell inner membrane. It carries out the reaction heme b(in) + ATP + H2O = heme b(out) + ADP + phosphate + H(+). Functionally, part of the ABC transporter complex CcmAB involved in the biogenesis of c-type cytochromes; once thought to export heme, this seems not to be the case, but its exact role is uncertain. Responsible for energy coupling to the transport system. The polypeptide is Cytochrome c biogenesis ATP-binding export protein CcmA (Methylococcus capsulatus (strain ATCC 33009 / NCIMB 11132 / Bath)).